We begin with the raw amino-acid sequence, 212 residues long: Orotate phosphoribosyltransferase (212 aa).

Residues Arg-97, Lys-101, His-103, and 123–131 (EDLISTGGS) contribute to the 5-phospho-alpha-D-ribose 1-diphosphate site. Ser-127 provides a ligand contact to orotate.

This sequence belongs to the purine/pyrimidine phosphoribosyltransferase family. PyrE subfamily. Homodimer. Requires Mg(2+) as cofactor.

It carries out the reaction orotidine 5'-phosphate + diphosphate = orotate + 5-phospho-alpha-D-ribose 1-diphosphate. The protein operates within pyrimidine metabolism; UMP biosynthesis via de novo pathway; UMP from orotate: step 1/2. Functionally, catalyzes the transfer of a ribosyl phosphate group from 5-phosphoribose 1-diphosphate to orotate, leading to the formation of orotidine monophosphate (OMP). In Bacteroides fragilis (strain ATCC 25285 / DSM 2151 / CCUG 4856 / JCM 11019 / LMG 10263 / NCTC 9343 / Onslow / VPI 2553 / EN-2), this protein is Orotate phosphoribosyltransferase.